Consider the following 206-residue polypeptide: Uridine kinase (206 aa).

9 to 16 (GGSGSGKT) provides a ligand contact to ATP.

This sequence belongs to the uridine kinase family.

The protein localises to the cytoplasm. The catalysed reaction is uridine + ATP = UMP + ADP + H(+). It carries out the reaction cytidine + ATP = CMP + ADP + H(+). It participates in pyrimidine metabolism; CTP biosynthesis via salvage pathway; CTP from cytidine: step 1/3. Its pathway is pyrimidine metabolism; UMP biosynthesis via salvage pathway; UMP from uridine: step 1/1. This chain is Uridine kinase, found in Borrelia garinii subsp. bavariensis (strain ATCC BAA-2496 / DSM 23469 / PBi) (Borreliella bavariensis).